The chain runs to 365 residues: Putative chalcone synthase (365 aa).

Residue Cys-144 is part of the active site.

The protein belongs to the thiolase-like superfamily. Chalcone/stilbene synthases family.

It carries out the reaction (E)-4-coumaroyl-CoA + 3 malonyl-CoA + 3 H(+) = 2',4,4',6'-tetrahydroxychalcone + 3 CO2 + 4 CoA. In Bacillus subtilis (strain 168), this protein is Putative chalcone synthase (bcsA).